A 450-amino-acid chain; its full sequence is Phosphoglucosamine mutase (450 aa).

The Phosphoserine intermediate role is filled by Ser102. The Mg(2+) site is built by Ser102, Asp243, Asp245, and Asp247. A Phosphoserine modification is found at Ser102.

The protein belongs to the phosphohexose mutase family. It depends on Mg(2+) as a cofactor. Post-translationally, activated by phosphorylation.

The enzyme catalyses alpha-D-glucosamine 1-phosphate = D-glucosamine 6-phosphate. Catalyzes the conversion of glucosamine-6-phosphate to glucosamine-1-phosphate. This chain is Phosphoglucosamine mutase, found in Rhizobium etli (strain ATCC 51251 / DSM 11541 / JCM 21823 / NBRC 15573 / CFN 42).